A 65-amino-acid chain; its full sequence is Small, acid-soluble spore protein 2 (65 aa).

Belongs to the alpha/beta-type SASP family.

Functionally, SASP are bound to spore DNA. They are double-stranded DNA-binding proteins that cause DNA to change to an a-like conformation. They protect the DNA backbone from chemical and enzymatic cleavage and are thus involved in dormant spore's high resistance to UV light. The sequence is that of Small, acid-soluble spore protein 2 (sasP-2) from Bacillus cereus.